Here is a 216-residue protein sequence, read N- to C-terminus: Pyrophosphatase PpaX (216 aa).

D9 acts as the Nucleophile in catalysis.

It belongs to the HAD-like hydrolase superfamily. PpaX family. Mg(2+) is required as a cofactor.

It catalyses the reaction diphosphate + H2O = 2 phosphate + H(+). Functionally, hydrolyzes pyrophosphate formed during P-Ser-HPr dephosphorylation by HPrK/P. Might play a role in controlling the intracellular pyrophosphate pool. This is Pyrophosphatase PpaX from Bacillus anthracis (strain A0248).